A 315-amino-acid chain; its full sequence is MDQYSNLFAFEDYLGAQARSIPDLPEVDVLSPRVVRVLGGNPGQMQLQGTNTYILGTGAERLLIDSGQGRARWEQLMASLAAEHKFRISTVLLTHWHLDHTGGVPHLFRIFPELRGANAIYKYHPDPSQQAIVDGQVFSVEGATVRAVFTPGHSTDHMCFLLQEEEAIFTGDTVLGHGTTGVEDLEEYMQSLRKIQSLGCRIGYPGHGAVIENMQQKVQQEIDRKQRRERQVLLALQNIQREKRTVGDANGAATQAELIEAIFGRLPADVADRFFAPYMKDILMKMARDKQVGFRFKGGQKHWFANVSQENPVCR.

Positions 95, 97, 99, and 100 each coordinate Zn(2+). The Proton donor/acceptor role is filled by D99.

Belongs to the metallo-beta-lactamase superfamily. The cofactor is Zn(2+). In terms of tissue distribution, endocrocin is specifically produced in conidia.

The catalysed reaction is atrochrysone carboxyl-[ACP] + H2O = atrochrysone carboxylate + holo-[ACP] + H(+). Its function is as follows. Atrochrysone carboxyl ACP thioesterase; part of the gene cluster that mediates the biosynthesis of endocrocin, a simple anthraquinone interesting for many biotechnological applications. The pathway begins with the synthesis of atrochrysone thioester by the polyketide synthase (PKS) encA. The atrochrysone carboxyl ACP thioesterase encB then breaks the thioester bond and releases the atrochrysone carboxylic acid from encA. The atrochrysone carboxylic acid is then converted to endocrocin anthrone which is further oxidized into endocrocin by the anthrone oxygenase encC. The exact function of encD has not been identified yet, but it negatively regulates endocrocin production, likely through the modification of endocrocin itself. This Aspergillus fumigatus (strain ATCC MYA-4609 / CBS 101355 / FGSC A1100 / Af293) (Neosartorya fumigata) protein is Atrochrysone carboxyl ACP thioesterase.